The sequence spans 389 residues: S-adenosylmethionine synthase (389 aa).

His-17 contributes to the ATP binding site. Position 19 (Asp-19) interacts with Mg(2+). Glu-45 serves as a coordination point for K(+). Glu-58 and Gln-101 together coordinate L-methionine. The segment at 101–111 (QSPDIGQGVDV) is flexible loop. ATP contacts are provided by residues 160 to 162 (DGK), 226 to 227 (RF), Asp-235, 241 to 242 (RK), Ala-258, and Lys-262. L-methionine is bound at residue Asp-235. Position 266 (Lys-266) interacts with L-methionine.

This sequence belongs to the AdoMet synthase family. In terms of assembly, homotetramer; dimer of dimers. It depends on Mg(2+) as a cofactor. Requires K(+) as cofactor.

The protein localises to the cytoplasm. The enzyme catalyses L-methionine + ATP + H2O = S-adenosyl-L-methionine + phosphate + diphosphate. The protein operates within amino-acid biosynthesis; S-adenosyl-L-methionine biosynthesis; S-adenosyl-L-methionine from L-methionine: step 1/1. Its function is as follows. Catalyzes the formation of S-adenosylmethionine (AdoMet) from methionine and ATP. The overall synthetic reaction is composed of two sequential steps, AdoMet formation and the subsequent tripolyphosphate hydrolysis which occurs prior to release of AdoMet from the enzyme. This is S-adenosylmethionine synthase from Anaeromyxobacter sp. (strain Fw109-5).